Here is a 435-residue protein sequence, read N- to C-terminus: Putative dimethyl sulfoxide reductase membrane subunit C (435 aa).

Helical transmembrane passes span 22–42 (GWLG…AYQL), 57–77 (WGLY…GLIL), 95–115 (LGVL…LPDI), 135–155 (VWDF…LWLL), 186–206 (FWTA…TGWI), 220–240 (LVAP…LLVV), 257–277 (LTSL…YLLA), 281–301 (LPHA…FLIG), 304–324 (VYFW…LATP), 333–353 (IFTA…RLVF), and 392–412 (VEIA…MAGL).

The protein belongs to the NrfD family. In terms of assembly, probable multiprotein complex that likely consists of DmsA, DmsB and DmsC.

It is found in the cell membrane. Its function is as follows. Dimethyl sulfoxide (DMSO) reductase catalyzes the reduction of dimethyl sulfoxide (DMSO) to dimethyl sulfide (DMS) during anaerobic respiration; it can also use trimethylamine N-oxide (TMAO) as terminal electron acceptor. Subunit C is proposed to be a membrane anchoring subunit. In Halobacterium salinarum (strain ATCC 700922 / JCM 11081 / NRC-1) (Halobacterium halobium), this protein is Putative dimethyl sulfoxide reductase membrane subunit C (dmsC).